The primary structure comprises 173 residues: Atrial gland and califin peptides (173 aa).

The signal sequence occupies residues 1 to 21 (MKANTMFIILCLSLSTLCVSS). Positions 22–34 (QSTSVHGKIFVPN) are excised as a propeptide. Isoleucine amide is present on Ile69. Positions 73–114 (AAGEMEQSEGQNPETKSHSWRKRSVLTPSLSSLGESLESGIS) are excised as a propeptide. The segment at 75–94 (GEMEQSEGQNPETKSHSWRK) is disordered. Cysteines 141 and 172 form a disulfide. Leu152 carries the leucine amide modification.

The protein belongs to the molluscan ELH family. As to quaternary structure, califin A consists of a 36-residue large subunit bound by a single disulfide bond to a 18-residue small subunit.

The protein resides in the secreted. Functionally, the atrial gland peptide A and peptide B precursors are the source of the 2 peptides that, upon release from this reproductive system gland, initiate the egg-laying process by exciting the bag cell neurons. These neurons, clustered in neural connectives near the abdominal ganglion, in turn release other peptides that act directly on the ganglion and also, via the circulating hemolymph, on many other organs to control the physiological processes of egg-laying. One of these other peptides is the egg-laying hormone. In terms of biological role, injected in sexually mature animals califin A excites LB and LC cells of the abdominal ganglion and causes egg-laying. The chain is Atrial gland and califin peptides from Aplysia californica (California sea hare).